The sequence spans 217 residues: MGQKVCAHGFRVGPTLIKGWDSILYAEKHYKTLFIQDLKIRDLINKGFNQAQISRVLIERPSNKSIIININAKKPNIIIGRNGSEIDKLKKAIEKMTSLKEVYINIHEVRKFNIDAAIVAQTIALQLEKRVSFRKAMKTAIQASFKQGGQGIRVSCSGRLGGAEIARTEWYIEGRMPLHTLRADIDYSTAEAITTYGVIGVKVWIYKGEYTENKRYN.

One can recognise a KH type-2 domain in the interval 40–110 (IRDLINKGFN…EVYINIHEVR (71 aa)).

This sequence belongs to the universal ribosomal protein uS3 family. As to quaternary structure, part of the 30S ribosomal subunit. Forms a tight complex with proteins S10 and S14.

Its function is as follows. Binds the lower part of the 30S subunit head. Binds mRNA in the 70S ribosome, positioning it for translation. The polypeptide is Small ribosomal subunit protein uS3 (Rickettsia africae (strain ESF-5)).